The primary structure comprises 490 residues: GDP-fucose protein O-fucosyltransferase 2 (490 aa).

The first 25 residues, Met1–Ala25, serve as a signal peptide directing secretion. N-linked (GlcNAc...) asparagine glycans are attached at residues Asn29 and Asn79. Ser81–Asn85 contacts GDP-beta-L-fucose. Residue Glu82 is the Proton acceptor of the active site. Cys203 and Cys226 are oxidised to a cystine. A GDP-beta-L-fucose-binding site is contributed by His336–Arg338. The N-linked (GlcNAc...) asparagine glycan is linked to Asn368. GDP-beta-L-fucose is bound by residues Asp418 and Thr435 to Phe436. Cys459 and Cys466 are joined by a disulfide.

Belongs to the glycosyltransferase 68 family.

It localises to the endoplasmic reticulum. The protein resides in the golgi apparatus. The enzyme catalyses L-seryl-[protein] + GDP-beta-L-fucose = 3-O-(alpha-L-fucosyl)-L-seryl-[protein] + GDP + H(+). It carries out the reaction L-threonyl-[protein] + GDP-beta-L-fucose = 3-O-(alpha-L-fucosyl)-L-threonyl-[protein] + GDP + H(+). It participates in protein modification; protein glycosylation. With respect to regulation, does not require divalent metal ions for optimal activity. Its function is as follows. Catalyzes the reaction that attaches fucose through an O-glycosidic linkage to a conserved serine or threonine residue in the consensus sequence C1-X-X-S/T-C2 of thrombospondin type I repeats (TSRs) where C1 and C2 are the first and second cysteines of the repeat, respectively. O-fucosylates members of several protein families including the ADAMTS, the thrombospondin (TSP) and spondin families. This chain is GDP-fucose protein O-fucosyltransferase 2, found in Drosophila melanogaster (Fruit fly).